The following is a 405-amino-acid chain: Acetate kinase (405 aa).

N7 serves as a coordination point for Mg(2+). K14 serves as a coordination point for ATP. R92 contacts substrate. The active-site Proton donor/acceptor is the D149. Residues 209–213 (HLGNG) and 284–286 (DMR) contribute to the ATP site. Mg(2+) is bound at residue E389.

This sequence belongs to the acetokinase family. As to quaternary structure, homodimer. It depends on Mg(2+) as a cofactor. Mn(2+) is required as a cofactor.

Its subcellular location is the cytoplasm. The enzyme catalyses acetate + ATP = acetyl phosphate + ADP. It participates in metabolic intermediate biosynthesis; acetyl-CoA biosynthesis; acetyl-CoA from acetate: step 1/2. Its function is as follows. Catalyzes the formation of acetyl phosphate from acetate and ATP. Can also catalyze the reverse reaction. This chain is Acetate kinase, found in Borrelia garinii subsp. bavariensis (strain ATCC BAA-2496 / DSM 23469 / PBi) (Borreliella bavariensis).